Reading from the N-terminus, the 411-residue chain is UPF0761 membrane protein PLES_43641 (411 aa).

Helical transmembrane passes span 36-56 (LFAV…IPAF), 92-112 (HLTW…LVTI), 132-152 (FLLY…GFAV), 174-194 (LLGL…YSAV), 207-229 (GGVF…VSLF), and 244-264 (IFLL…VLVC).

The protein belongs to the UPF0761 family.

The protein localises to the cell inner membrane. The sequence is that of UPF0761 membrane protein PLES_43641 from Pseudomonas aeruginosa (strain LESB58).